Here is a 230-residue protein sequence, read N- to C-terminus: Prepilin leader peptidase/N-methyltransferase (230 aa).

7 consecutive transmembrane segments (helical) span residues 1 to 21 (MIYF…WFYL), 60 to 80 (GHIL…QIAF), 84 to 104 (IFTV…YLDW), 114 to 134 (CLWL…LLTL), 140 to 160 (SAAS…FYYG), 181 to 201 (LETL…FSLI), and 208 to 228 (FLPF…VKYY).

The protein belongs to the peptidase A24 family.

It localises to the cell inner membrane. It carries out the reaction Typically cleaves a -Gly-|-Phe- bond to release an N-terminal, basic peptide of 5-8 residues from type IV prepilin, and then N-methylates the new N-terminal amino group, the methyl donor being S-adenosyl-L-methionine.. Plays a role in type II pseudopili formation by proteolytically removing the leader sequence from substrate proteins and subsequently monomethylating the alpha-amino group of the newly exposed N-terminal phenylalanine. Substrates include proteins required for biogenesis of the type II general secretory apparatus. The protein is Prepilin leader peptidase/N-methyltransferase (hofD) of Haemophilus influenzae (strain ATCC 51907 / DSM 11121 / KW20 / Rd).